A 338-amino-acid chain; its full sequence is Inositol 2-dehydrogenase 3 (338 aa).

Belongs to the Gfo/Idh/MocA family. As to quaternary structure, homotetramer.

It carries out the reaction myo-inositol + NAD(+) = scyllo-inosose + NADH + H(+). Involved in the oxidation of myo-inositol (MI) to 2-keto-myo-inositol (2KMI or 2-inosose). In Saccharopolyspora erythraea (strain ATCC 11635 / DSM 40517 / JCM 4748 / NBRC 13426 / NCIMB 8594 / NRRL 2338), this protein is Inositol 2-dehydrogenase 3.